Reading from the N-terminus, the 1578-residue chain is Pentafunctional AROM polypeptide (1578 aa).

The interval 1–393 (MSVELAKVSI…YGTSAHVVSD (393 aa)) is 3-dehydroquinate synthase. NAD(+) is bound by residues 44-46 (DTN), 79-82 (EAHK), 110-112 (GGV), and aspartate 115. Residue arginine 126 participates in 7-phospho-2-dehydro-3-deoxy-D-arabino-heptonate binding. An NAD(+)-binding site is contributed by 135-136 (TS). Aspartate 142 and lysine 148 together coordinate 7-phospho-2-dehydro-3-deoxy-D-arabino-heptonate. Residue lysine 157 coordinates NAD(+). Asparagine 158 is a binding site for 7-phospho-2-dehydro-3-deoxy-D-arabino-heptonate. Residues 175 to 178 (WLET) and asparagine 186 contribute to the NAD(+) site. Glutamate 190 contributes to the Zn(2+) binding site. Residues 190–193 (EVIK) and lysine 259 contribute to the 7-phospho-2-dehydro-3-deoxy-D-arabino-heptonate site. The active-site Proton acceptor; for 3-dehydroquinate synthase activity is the glutamate 269. Residues 273-277 (RNLLN) and histidine 280 each bind 7-phospho-2-dehydro-3-deoxy-D-arabino-heptonate. Histidine 280 contacts Zn(2+). Histidine 284 functions as the Proton acceptor; for 3-dehydroquinate synthase activity in the catalytic mechanism. 7-phospho-2-dehydro-3-deoxy-D-arabino-heptonate is bound by residues histidine 296 and lysine 365. Residue histidine 296 coordinates Zn(2+). An EPSP synthase region spans residues 406–863 (VHPFNNIPEG…WDVLHSQLGA (458 aa)). Residue cysteine 845 is the For EPSP synthase activity of the active site. Positions 882–1071 (VVIIGMRAAG…VPSRRSAFVC (190 aa)) are shikimate kinase. An ATP-binding site is contributed by 886-893 (GMRAAGKS). Positions 1072-1284 (LTFEDLSDHL…AAPGQLTLAE (213 aa)) are 3-dehydroquinase. The active-site Proton acceptor; for 3-dehydroquinate dehydratase activity is histidine 1189. Lysine 1218 serves as the catalytic Schiff-base intermediate with substrate; for 3-dehydroquinate dehydratase activity. A shikimate dehydrogenase region spans residues 1297 to 1578 (AKKFFVIGSP…KAIFDAVTQE (282 aa)).

In the N-terminal section; belongs to the sugar phosphate cyclases superfamily. Dehydroquinate synthase family. It in the 2nd section; belongs to the EPSP synthase family. This sequence in the 3rd section; belongs to the shikimate kinase family. The protein in the 4th section; belongs to the type-I 3-dehydroquinase family. In the C-terminal section; belongs to the shikimate dehydrogenase family. Homodimer. Zn(2+) serves as cofactor.

It localises to the cytoplasm. The enzyme catalyses 7-phospho-2-dehydro-3-deoxy-D-arabino-heptonate = 3-dehydroquinate + phosphate. The catalysed reaction is 3-dehydroquinate = 3-dehydroshikimate + H2O. It catalyses the reaction shikimate + NADP(+) = 3-dehydroshikimate + NADPH + H(+). It carries out the reaction shikimate + ATP = 3-phosphoshikimate + ADP + H(+). The enzyme catalyses 3-phosphoshikimate + phosphoenolpyruvate = 5-O-(1-carboxyvinyl)-3-phosphoshikimate + phosphate. The protein operates within metabolic intermediate biosynthesis; chorismate biosynthesis; chorismate from D-erythrose 4-phosphate and phosphoenolpyruvate: step 2/7. Its pathway is metabolic intermediate biosynthesis; chorismate biosynthesis; chorismate from D-erythrose 4-phosphate and phosphoenolpyruvate: step 3/7. It participates in metabolic intermediate biosynthesis; chorismate biosynthesis; chorismate from D-erythrose 4-phosphate and phosphoenolpyruvate: step 4/7. It functions in the pathway metabolic intermediate biosynthesis; chorismate biosynthesis; chorismate from D-erythrose 4-phosphate and phosphoenolpyruvate: step 5/7. The protein operates within metabolic intermediate biosynthesis; chorismate biosynthesis; chorismate from D-erythrose 4-phosphate and phosphoenolpyruvate: step 6/7. In terms of biological role, the AROM polypeptide catalyzes 5 consecutive enzymatic reactions in prechorismate polyaromatic amino acid biosynthesis. The protein is Pentafunctional AROM polypeptide of Kluyveromyces lactis (strain ATCC 8585 / CBS 2359 / DSM 70799 / NBRC 1267 / NRRL Y-1140 / WM37) (Yeast).